A 682-amino-acid polypeptide reads, in one-letter code: Nisin leader peptide-processing serine protease NisP (682 aa).

The N-terminal stretch at 1–22 (MKKILGFLFIVCSLGLSATVHG) is a signal peptide. Positions 23–195 (ETTNSQQLLS…RKAKEVVSLR (173 aa)) are excised as a propeptide. A Peptidase S8 domain is found at 231-566 (QWDMKYVTNN…VDLLNGKNKA (336 aa)). Active-site charge relay system residues include D259, H306, and S512. The short motif at 652–656 (LPVTG) is the LPXTG sorting signal element. At T655 the chain carries Pentaglycyl murein peptidoglycan amidated threonine. Positions 656 to 682 (GDGEDFLPALGIVCISILGILKRKTKN) are cleaved as a propeptide — removed by sortase.

This sequence belongs to the peptidase S8 family.

The protein resides in the secreted. Its subcellular location is the cell wall. The protein operates within antibiotic biosynthesis; nisin biosynthesis. Cleaves the lantibiotic nisin precursor peptide. In Lactococcus lactis subsp. lactis (Streptococcus lactis), this protein is Nisin leader peptide-processing serine protease NisP (nisP).